Consider the following 71-residue polypeptide: Small ribosomal subunit protein bS18 (71 aa).

It belongs to the bacterial ribosomal protein bS18 family. In terms of assembly, part of the 30S ribosomal subunit. Forms a tight heterodimer with protein bS6.

In terms of biological role, binds as a heterodimer with protein bS6 to the central domain of the 16S rRNA, where it helps stabilize the platform of the 30S subunit. The protein is Small ribosomal subunit protein bS18 of Synechococcus sp. (strain JA-2-3B'a(2-13)) (Cyanobacteria bacterium Yellowstone B-Prime).